A 364-amino-acid polypeptide reads, in one-letter code: Protein-glutamate methylesterase/protein-glutamine glutaminase 3 (364 aa).

A Response regulatory domain is found at 7–124 (RVLIVDDSAS…THALLEASAR (118 aa)). D58 is subject to 4-aspartylphosphate. The region spanning 167–358 (PTTERLVCIG…REIMLWQDAK (192 aa)) is the CheB-type methylesterase domain. Catalysis depends on residues S178, H204, and D300.

This sequence belongs to the CheB family. Phosphorylated by CheA. Phosphorylation of the N-terminal regulatory domain activates the methylesterase activity.

It is found in the cytoplasm. It catalyses the reaction [protein]-L-glutamate 5-O-methyl ester + H2O = L-glutamyl-[protein] + methanol + H(+). The enzyme catalyses L-glutaminyl-[protein] + H2O = L-glutamyl-[protein] + NH4(+). In terms of biological role, involved in chemotaxis. Part of a chemotaxis signal transduction system that modulates chemotaxis in response to various stimuli. Catalyzes the demethylation of specific methylglutamate residues introduced into the chemoreceptors (methyl-accepting chemotaxis proteins or MCP) by CheR. Also mediates the irreversible deamidation of specific glutamine residues to glutamic acid. The polypeptide is Protein-glutamate methylesterase/protein-glutamine glutaminase 3 (Rhodopseudomonas palustris (strain BisB18)).